We begin with the raw amino-acid sequence, 285 residues long: Small ribosomal subunit protein uS2 (285 aa).

The interval 262–285 (NDDWNEDDTAPAAPGAASWGGAAF) is disordered. Residues 271–285 (APAAPGAASWGGAAF) are compositionally biased toward low complexity.

Belongs to the universal ribosomal protein uS2 family. In terms of assembly, component of the small ribosomal subunit. Mature ribosomes consist of a small (40S) and a large (60S) subunit. The 40S subunit contains about 33 different proteins and 1 molecule of RNA (18S). The 60S subunit contains about 49 different proteins and 3 molecules of RNA (28S, 5.8S and 5S). Interacts with ribosomal protein S21.

Its subcellular location is the cytoplasm. Functionally, required for the assembly and/or stability of the 40S ribosomal subunit. Required for the processing of the 20S rRNA-precursor to mature 18S rRNA in a late step of the maturation of 40S ribosomal subunits. The polypeptide is Small ribosomal subunit protein uS2 (Anopheles gambiae (African malaria mosquito)).